The sequence spans 126 residues: Glycine cleavage system H protein (126 aa).

Residues 22–104 form the Lipoyl-binding domain; sequence IAYVGITDYA…YGEGWLIKMK (83 aa). The residue at position 63 (K63) is an N6-lipoyllysine.

Belongs to the GcvH family. The glycine cleavage system is composed of four proteins: P, T, L and H. (R)-lipoate serves as cofactor.

The glycine cleavage system catalyzes the degradation of glycine. The H protein shuttles the methylamine group of glycine from the P protein to the T protein. This Bacteroides thetaiotaomicron (strain ATCC 29148 / DSM 2079 / JCM 5827 / CCUG 10774 / NCTC 10582 / VPI-5482 / E50) protein is Glycine cleavage system H protein.